A 278-amino-acid chain; its full sequence is DNA-directed RNA polymerase subunit alpha (278 aa).

The protein belongs to the RNA polymerase alpha chain family. In plastids the minimal PEP RNA polymerase catalytic core is composed of four subunits: alpha, beta, beta', and beta''. When a (nuclear-encoded) sigma factor is associated with the core the holoenzyme is formed, which can initiate transcription.

The protein localises to the plastid. The protein resides in the chloroplast. It carries out the reaction RNA(n) + a ribonucleoside 5'-triphosphate = RNA(n+1) + diphosphate. Its function is as follows. DNA-dependent RNA polymerase catalyzes the transcription of DNA into RNA using the four ribonucleoside triphosphates as substrates. In Chlorella vulgaris (Green alga), this protein is DNA-directed RNA polymerase subunit alpha (rpoA).